The chain runs to 117 residues: Large ribosomal subunit protein uL18 (117 aa).

It belongs to the universal ribosomal protein uL18 family. Part of the 50S ribosomal subunit; part of the 5S rRNA/L5/L18/L25 subcomplex. Contacts the 5S and 23S rRNAs.

Its function is as follows. This is one of the proteins that bind and probably mediate the attachment of the 5S RNA into the large ribosomal subunit, where it forms part of the central protuberance. The protein is Large ribosomal subunit protein uL18 of Mycoplasma mobile (strain ATCC 43663 / 163K / NCTC 11711) (Mesomycoplasma mobile).